The chain runs to 175 residues: NADH-ubiquinone oxidoreductase chain 6 (175 aa).

6 consecutive transmembrane segments (helical) span residues 1–21 (MMYIVFIMSVLYVVGFIGFSS), 24–44 (SPVYGGMSLVVSGGLGCGIIM), 51–71 (LGLVVFLVYLGGMMVVFGYTI), 87–107 (VVLSAFLVGLLMEVFMVVWLF), 112–132 (ELVGFYFGGLESFVTLGEGGF), and 148–168 (CGFWFLAMAGWMLFVSIFIAT).

It belongs to the complex I subunit 6 family. Core subunit of respiratory chain NADH dehydrogenase (Complex I) which is composed of 45 different subunits.

It localises to the mitochondrion inner membrane. The enzyme catalyses a ubiquinone + NADH + 5 H(+)(in) = a ubiquinol + NAD(+) + 4 H(+)(out). Core subunit of the mitochondrial membrane respiratory chain NADH dehydrogenase (Complex I) which catalyzes electron transfer from NADH through the respiratory chain, using ubiquinone as an electron acceptor. Essential for the catalytic activity and assembly of complex I. The sequence is that of NADH-ubiquinone oxidoreductase chain 6 (MT-ND6) from Elephas maximus (Indian elephant).